We begin with the raw amino-acid sequence, 344 residues long: GTP 3',8-cyclase (344 aa).

Residues 19–244 (PFGRTISYLR…MDLAESTGGP (226 aa)) enclose the Radical SAM core domain. A GTP-binding site is contributed by Arg-28. Positions 35 and 39 each coordinate [4Fe-4S] cluster. Position 41 (Tyr-41) interacts with S-adenosyl-L-methionine. Cys-42 is a [4Fe-4S] cluster binding site. Residue Arg-77 participates in GTP binding. Gly-81 provides a ligand contact to S-adenosyl-L-methionine. Thr-111 serves as a coordination point for GTP. An S-adenosyl-L-methionine-binding site is contributed by Ser-135. A GTP-binding site is contributed by Lys-171. Met-205 is a binding site for S-adenosyl-L-methionine. Cys-268 and Cys-271 together coordinate [4Fe-4S] cluster. 273-275 (RVR) contributes to the GTP binding site. [4Fe-4S] cluster is bound at residue Cys-285.

This sequence belongs to the radical SAM superfamily. MoaA family. As to quaternary structure, monomer and homodimer. [4Fe-4S] cluster is required as a cofactor.

The enzyme catalyses GTP + AH2 + S-adenosyl-L-methionine = (8S)-3',8-cyclo-7,8-dihydroguanosine 5'-triphosphate + 5'-deoxyadenosine + L-methionine + A + H(+). It participates in cofactor biosynthesis; molybdopterin biosynthesis. In terms of biological role, catalyzes the cyclization of GTP to (8S)-3',8-cyclo-7,8-dihydroguanosine 5'-triphosphate. This chain is GTP 3',8-cyclase, found in Bradyrhizobium diazoefficiens (strain JCM 10833 / BCRC 13528 / IAM 13628 / NBRC 14792 / USDA 110).